The sequence spans 151 residues: 3-hydroxyacyl-[acyl-carrier-protein] dehydratase FabZ (151 aa).

Residue histidine 58 is part of the active site.

This sequence belongs to the thioester dehydratase family. FabZ subfamily.

It localises to the cytoplasm. The enzyme catalyses a (3R)-hydroxyacyl-[ACP] = a (2E)-enoyl-[ACP] + H2O. Its function is as follows. Involved in unsaturated fatty acids biosynthesis. Catalyzes the dehydration of short chain beta-hydroxyacyl-ACPs and long chain saturated and unsaturated beta-hydroxyacyl-ACPs. This is 3-hydroxyacyl-[acyl-carrier-protein] dehydratase FabZ from Histophilus somni (strain 129Pt) (Haemophilus somnus).